A 338-amino-acid polypeptide reads, in one-letter code: Holliday junction branch migration complex subunit RuvB (338 aa).

The tract at residues 1 to 180 (MERLLDNKFS…FGIIERLDYY (180 aa)) is large ATPase domain (RuvB-L). Residues Leu19, Arg20, Gly61, Lys64, Thr65, Thr66, Arg170, Tyr180, and Arg217 each coordinate ATP. Position 65 (Thr65) interacts with Mg(2+). The segment at 181-251 (TVEELSQIVM…VAKSGLEMFE (71 aa)) is small ATPAse domain (RuvB-S). The head domain (RuvB-H) stretch occupies residues 254 to 338 (EYGLDLVDRN…FKLKESGDNR (85 aa)). DNA is bound by residues Lys309 and Arg314.

This sequence belongs to the RuvB family. Homohexamer. Forms an RuvA(8)-RuvB(12)-Holliday junction (HJ) complex. HJ DNA is sandwiched between 2 RuvA tetramers; dsDNA enters through RuvA and exits via RuvB. An RuvB hexamer assembles on each DNA strand where it exits the tetramer. Each RuvB hexamer is contacted by two RuvA subunits (via domain III) on 2 adjacent RuvB subunits; this complex drives branch migration. In the full resolvosome a probable DNA-RuvA(4)-RuvB(12)-RuvC(2) complex forms which resolves the HJ.

The protein resides in the cytoplasm. The catalysed reaction is ATP + H2O = ADP + phosphate + H(+). Its function is as follows. The RuvA-RuvB-RuvC complex processes Holliday junction (HJ) DNA during genetic recombination and DNA repair, while the RuvA-RuvB complex plays an important role in the rescue of blocked DNA replication forks via replication fork reversal (RFR). RuvA specifically binds to HJ cruciform DNA, conferring on it an open structure. The RuvB hexamer acts as an ATP-dependent pump, pulling dsDNA into and through the RuvAB complex. RuvB forms 2 homohexamers on either side of HJ DNA bound by 1 or 2 RuvA tetramers; 4 subunits per hexamer contact DNA at a time. Coordinated motions by a converter formed by DNA-disengaged RuvB subunits stimulates ATP hydrolysis and nucleotide exchange. Immobilization of the converter enables RuvB to convert the ATP-contained energy into a lever motion, pulling 2 nucleotides of DNA out of the RuvA tetramer per ATP hydrolyzed, thus driving DNA branch migration. The RuvB motors rotate together with the DNA substrate, which together with the progressing nucleotide cycle form the mechanistic basis for DNA recombination by continuous HJ branch migration. Branch migration allows RuvC to scan DNA until it finds its consensus sequence, where it cleaves and resolves cruciform DNA. In Caldicellulosiruptor bescii (strain ATCC BAA-1888 / DSM 6725 / KCTC 15123 / Z-1320) (Anaerocellum thermophilum), this protein is Holliday junction branch migration complex subunit RuvB.